We begin with the raw amino-acid sequence, 54 residues long: UPF0391 membrane protein msr3702 (54 aa).

A run of 2 helical transmembrane segments spans residues 4–24 (WALVFLVVAIIAGALGFGGIA) and 30–50 (IAQILFFIFLAFLVISLLAGL).

This sequence belongs to the UPF0391 family.

It localises to the cell membrane. This Mesorhizobium japonicum (strain LMG 29417 / CECT 9101 / MAFF 303099) (Mesorhizobium loti (strain MAFF 303099)) protein is UPF0391 membrane protein msr3702.